Reading from the N-terminus, the 155-residue chain is MRKAKPKKRYLLPDPKFSDTMVTKFVNSLMYDGKKSTAYSIFYDAVALVEKKTSESGLEVWKKALNNVSPQVEVRSRRVGGSTFQVPTEVRPDRKMALGMKWLINYARSRGEKTMTDKLAGEIISASKGEGAAVKKRDDVHRMAEANKAFSHFRF.

The protein belongs to the universal ribosomal protein uS7 family. In terms of assembly, part of the 30S ribosomal subunit. Contacts proteins S9 and S11.

Its function is as follows. One of the primary rRNA binding proteins, it binds directly to 16S rRNA where it nucleates assembly of the head domain of the 30S subunit. Is located at the subunit interface close to the decoding center, probably blocks exit of the E-site tRNA. The sequence is that of Small ribosomal subunit protein uS7 from Cytophaga hutchinsonii (strain ATCC 33406 / DSM 1761 / CIP 103989 / NBRC 15051 / NCIMB 9469 / D465).